The sequence spans 280 residues: Uroporphyrinogen-III C-methyltransferase (280 aa).

S-adenosyl-L-homocysteine contacts are provided by residues proline 24, 100-102 (GGD), 130-131 (TA), methionine 184, alanine 213, and alanine 241.

This sequence belongs to the precorrin methyltransferase family. As to quaternary structure, homodimer.

The enzyme catalyses uroporphyrinogen III + 2 S-adenosyl-L-methionine = precorrin-2 + 2 S-adenosyl-L-homocysteine + H(+). It catalyses the reaction uroporphyrinogen III + S-adenosyl-L-methionine = precorrin-1 + S-adenosyl-L-homocysteine + H(+). The catalysed reaction is precorrin-1 + S-adenosyl-L-methionine = precorrin-2 + S-adenosyl-L-homocysteine. It functions in the pathway cofactor biosynthesis; adenosylcobalamin biosynthesis; precorrin-2 from uroporphyrinogen III: step 1/1. The protein operates within porphyrin-containing compound metabolism; siroheme biosynthesis; precorrin-2 from uroporphyrinogen III: step 1/1. S-adenosylhomocysteine is an extremely powerful competitive inhibitor of the uroporphyrinogen III methylation. SUMT exhibits a substrate inhibition phenomenon at uroporphyrinogen III concentrations above 2 uM; this property might play a regulatory role in cobalamin biosynthesis. The enzyme activity is completely insensitive to feedback inhibition by cobalamin and corrinoid intermediates. In terms of biological role, catalyzes the two successive C-2 and C-7 methylation reactions involved in the conversion of uroporphyrinogen III to precorrin-2 via the intermediate formation of precorrin-1. It is a step in the biosynthesis of both cobalamin (vitamin B12) and siroheme. Neither uroporphyrin III nor the chlorin (factor I) is a substrate of SUMT. The chain is Uroporphyrinogen-III C-methyltransferase from Sinorhizobium sp.